The sequence spans 124 residues: uncharacterized protein (124 aa).

Residues Met-1–Tyr-65 are disordered. Positions Leu-37–Val-47 are enriched in polar residues.

This is an uncharacterized protein from Microplitis demolitor (Parasitoid wasp).